The primary structure comprises 377 residues: Probable tRNA pseudouridine synthase D (377 aa).

D89 (nucleophile) is an active-site residue. The TRUD domain occupies 160 to 377 (YLPAFIGYQR…ILRGDPRKFT (218 aa)).

Belongs to the pseudouridine synthase TruD family.

It carries out the reaction uridine(13) in tRNA = pseudouridine(13) in tRNA. In terms of biological role, could be responsible for synthesis of pseudouridine from uracil-13 in transfer RNAs. In Saccharolobus solfataricus (strain ATCC 35092 / DSM 1617 / JCM 11322 / P2) (Sulfolobus solfataricus), this protein is Probable tRNA pseudouridine synthase D.